Consider the following 475-residue polypeptide: ATP synthase subunit beta, chloroplastic (475 aa).

155–162 is an ATP binding site; sequence GGAGVGKT.

This sequence belongs to the ATPase alpha/beta chains family. As to quaternary structure, F-type ATPases have 2 components, CF(1) - the catalytic core - and CF(0) - the membrane proton channel. CF(1) has five subunits: alpha(3), beta(3), gamma(1), delta(1), epsilon(1). CF(0) has four main subunits: a(1), b(1), b'(1) and c(9-12).

It localises to the plastid. It is found in the chloroplast thylakoid membrane. The enzyme catalyses ATP + H2O + 4 H(+)(in) = ADP + phosphate + 5 H(+)(out). In terms of biological role, produces ATP from ADP in the presence of a proton gradient across the membrane. The catalytic sites are hosted primarily by the beta subunits. This chain is ATP synthase subunit beta, chloroplastic, found in Ochrosphaera neapolitana.